The following is a 464-amino-acid chain: Probable LL-diaminopimelate aminotransferase, chloroplastic (464 aa).

Residues M1–R39 constitute a chloroplast transit peptide. G102 contributes to the substrate binding site. Y132 contacts pyridoxal 5'-phosphate. E135, K167, Y190, and N247 together coordinate substrate. Pyridoxal 5'-phosphate contacts are provided by N247, D275, Y278, S305, and S307. At K308 the chain carries N6-(pyridoxal phosphate)lysine. Pyridoxal 5'-phosphate is bound at residue R316. Residues N347 and R442 each contribute to the substrate site.

It belongs to the class-I pyridoxal-phosphate-dependent aminotransferase family. LL-diaminopimelate aminotransferase subfamily. In terms of assembly, homodimer. Pyridoxal 5'-phosphate is required as a cofactor.

Its subcellular location is the plastid. It localises to the chloroplast. The enzyme catalyses (2S,6S)-2,6-diaminopimelate + 2-oxoglutarate = (S)-2,3,4,5-tetrahydrodipicolinate + L-glutamate + H2O + H(+). The protein operates within amino-acid biosynthesis; L-lysine biosynthesis via DAP pathway; LL-2,6-diaminopimelate from (S)-tetrahydrodipicolinate (aminotransferase route): step 1/1. Functionally, required for lysine biosynthesis. Catalyzes the direct conversion of tetrahydrodipicolinate to LL-diaminopimelate, a reaction that requires three enzymes in E.coli. The sequence is that of Probable LL-diaminopimelate aminotransferase, chloroplastic (AGD2) from Oryza sativa subsp. japonica (Rice).